Consider the following 238-residue polypeptide: Cysteine-rich venom protein pseudechetoxin-like (238 aa).

Residues 1 to 19 form the signal peptide; sequence MIAFTVLLSLAAVLQQSSG. The propeptide occupies 20–28; sequence TVDFASESS. The 127-residue stretch at 38-164 folds into the SCP domain; sequence VDKHNDLRRS…STKYLYVCQY (127 aa). 8 disulfide bridges follow: Cys-75/Cys-153, Cys-92/Cys-165, Cys-148/Cys-162, Cys-184/Cys-191, Cys-187/Cys-196, Cys-200/Cys-233, Cys-209/Cys-227, and Cys-218/Cys-231. Residues 200–233 enclose the ShKT domain; it reads CKHNNDFSNCKALAKKSKCQTEWIKSKCPATCFC.

Belongs to the CRISP family. Expressed by the venom gland.

The protein resides in the secreted. Its function is as follows. Blocks olfactory (CNGA2) and retinal (CNGA1) CNG channel currents. Does not affect neither depolarization- nor caffeine-induced contraction of smooth muscle. This chain is Cysteine-rich venom protein pseudechetoxin-like, found in Oxyuranus scutellatus scutellatus (Australian taipan).